Consider the following 417-residue polypeptide: MSRFKSDFLRTLDERGFIHQISDEAGLDELFAKETVTAYIGYDPTASSLHVGHLTQIMMLHWMQKTGHQPISLMGGGTGMVGDPSFKEEARKLMTIDMIEDNITSLKHVFANYLDYDRAENPALMINNADWLRGLNYLEFLRDVGRHFSVNRMLSFDSVKTRLDREQSLSFLEFNYMILQAYDFVELNQRTGCRLQMGGSDQWGNIINGIDLGHRMGTPQLYALTSPLLTTSSGAKMGKSASGAVWLNKDLLPVYDFWQYWRNTEDADVVRFAKLFTTLPMDEIARIATLGGSEINEAKKILATEVTAILHGRAAAEEAAETARKTFEEGALAENLPSIEVPTSELDAGVGVLSLIVRAGLASSNGEARRHVQGGAVKINEQGVSDERQIIGTGEVTGDGVIKLSVGKKKHVLVRPA.

Tyr-39 provides a ligand contact to L-tyrosine. The 'HIGH' region motif lies at 44–53 (PTASSLHVGH). The L-tyrosine site is built by Tyr-176 and Gln-180. Positions 236 to 240 (KMGKS) match the 'KMSKS' region motif. Lys-239 contributes to the ATP binding site. Residues 350–416 (VGVLSLIVRA…GKKKHVLVRP (67 aa)) enclose the S4 RNA-binding domain.

Belongs to the class-I aminoacyl-tRNA synthetase family. TyrS type 1 subfamily. Homodimer.

It localises to the cytoplasm. The catalysed reaction is tRNA(Tyr) + L-tyrosine + ATP = L-tyrosyl-tRNA(Tyr) + AMP + diphosphate + H(+). Catalyzes the attachment of tyrosine to tRNA(Tyr) in a two-step reaction: tyrosine is first activated by ATP to form Tyr-AMP and then transferred to the acceptor end of tRNA(Tyr). In Agrobacterium fabrum (strain C58 / ATCC 33970) (Agrobacterium tumefaciens (strain C58)), this protein is Tyrosine--tRNA ligase.